The primary structure comprises 815 residues: Serotype-specific mannosyltransferase WbdA (815 aa).

The alpha-(1-&gt;2)-mannosyltransferase stretch occupies residues 1 to 374 (MSRAIIENAG…WANTAHLAID (374 aa)). Positions 431 to 804 (KLLVDISVLA…WKQSAELLLK (374 aa)) are alpha-(1-&gt;3)-mannosyltransferase.

It belongs to the glycosyltransferase group 1 family. Glycosyltransferase 4 subfamily.

The protein localises to the cell inner membrane. It functions in the pathway bacterial outer membrane biogenesis; LPS O-antigen biosynthesis. In terms of biological role, mannosyltransferase involved in the biosynthesis of the repeat unit of the lipopolysaccharide (LPS) O-antigen region. In Escherichia coli, this protein is Serotype-specific mannosyltransferase WbdA.